A 304-amino-acid chain; its full sequence is Cbb3-type cytochrome c oxidase subunit CcoP (304 aa).

2 consecutive transmembrane segments (helical) span residues Leu11 to Ala31 and Trp61 to Pro81. Cytochrome c domains are found at residues Gln129–Ser209 and Val216–Ser296. The heme c site is built by Cys142, Cys145, His146, Met185, Cys228, Cys231, His232, and Met273.

This sequence belongs to the CcoP / FixP family. In terms of assembly, component of the cbb3-type cytochrome c oxidase at least composed of CcoN, CcoO, CcoQ and CcoP. The cofactor is heme c.

The protein localises to the cell inner membrane. Its pathway is energy metabolism; oxidative phosphorylation. In terms of biological role, C-type cytochrome. Part of the cbb3-type cytochrome c oxidase complex. CcoP subunit is required for transferring electrons from donor cytochrome c via its heme groups to CcoO subunit. From there, electrons are shuttled to the catalytic binuclear center of CcoN subunit where oxygen reduction takes place. The complex also functions as a proton pump. The chain is Cbb3-type cytochrome c oxidase subunit CcoP from Rubrivivax gelatinosus (Rhodocyclus gelatinosus).